We begin with the raw amino-acid sequence, 399 residues long: 4-hydroxyphenylpyruvate dioxygenase (399 aa).

2 VOC domains span residues 23–166 and 197–355; these read GYDH…LIER and RIDH…LFTK. His200, His283, and Glu366 together coordinate Fe cation.

Belongs to the 4HPPD family. Fe cation is required as a cofactor.

The enzyme catalyses 3-(4-hydroxyphenyl)pyruvate + O2 = homogentisate + CO2. It functions in the pathway amino-acid degradation; L-phenylalanine degradation; acetoacetate and fumarate from L-phenylalanine: step 3/6. This chain is 4-hydroxyphenylpyruvate dioxygenase (TCRP), found in Coccidioides posadasii (strain C735) (Valley fever fungus).